Reading from the N-terminus, the 233-residue chain is Orotidine 5'-phosphate decarboxylase (233 aa).

Residues D9, K31, 58–67 (DLKLHDIPNT), T120, R182, Q191, G211, and R212 each bind substrate. K60 functions as the Proton donor in the catalytic mechanism.

It belongs to the OMP decarboxylase family. Type 1 subfamily. As to quaternary structure, homodimer.

It carries out the reaction orotidine 5'-phosphate + H(+) = UMP + CO2. It functions in the pathway pyrimidine metabolism; UMP biosynthesis via de novo pathway; UMP from orotate: step 2/2. In terms of biological role, catalyzes the decarboxylation of orotidine 5'-monophosphate (OMP) to uridine 5'-monophosphate (UMP). In Listeria innocua serovar 6a (strain ATCC BAA-680 / CLIP 11262), this protein is Orotidine 5'-phosphate decarboxylase.